Reading from the N-terminus, the 396-residue chain is Chaperone protein DnaJ 1 (396 aa).

In terms of domain architecture, J spans 10–75 (DYYKVLGVPK…KKRKEYDEAR (66 aa)). A compositionally biased stretch (gly residues) spans 127–137 (LFNRGGAGPGT). The tract at residues 127-149 (LFNRGGAGPGTGTRTQPRRGQDI) is disordered. Residues 163–241 (GATVPLRMSS…CKGSGRAKSS (79 aa)) form a CR-type zinc finger. Zn(2+) contacts are provided by Cys-176, Cys-179, Cys-192, Cys-195, Cys-215, Cys-218, Cys-229, and Cys-232. 4 CXXCXGXG motif repeats span residues 176 to 183 (CKACSGTG), 192 to 199 (CPTCVGTG), 215 to 222 (CPDCKGRG), and 229 to 236 (CEICKGSG).

It belongs to the DnaJ family. As to quaternary structure, homodimer. Zn(2+) is required as a cofactor.

The protein resides in the cytoplasm. Functionally, participates actively in the response to hyperosmotic and heat shock by preventing the aggregation of stress-denatured proteins and by disaggregating proteins, also in an autonomous, DnaK-independent fashion. Unfolded proteins bind initially to DnaJ; upon interaction with the DnaJ-bound protein, DnaK hydrolyzes its bound ATP, resulting in the formation of a stable complex. GrpE releases ADP from DnaK; ATP binding to DnaK triggers the release of the substrate protein, thus completing the reaction cycle. Several rounds of ATP-dependent interactions between DnaJ, DnaK and GrpE are required for fully efficient folding. Also involved, together with DnaK and GrpE, in the DNA replication of plasmids through activation of initiation proteins. This Streptomyces avermitilis (strain ATCC 31267 / DSM 46492 / JCM 5070 / NBRC 14893 / NCIMB 12804 / NRRL 8165 / MA-4680) protein is Chaperone protein DnaJ 1.